A 123-amino-acid polypeptide reads, in one-letter code: Small ribosomal subunit protein uS13 (123 aa).

The tract at residues 95 to 123 (GLPVRGQSSKTNARTRKGPRRSVMSRKKK) is disordered. Residues 107-123 (ARTRKGPRRSVMSRKKK) show a composition bias toward basic residues.

This sequence belongs to the universal ribosomal protein uS13 family. As to quaternary structure, part of the 30S ribosomal subunit. Forms a loose heterodimer with protein S19. Forms two bridges to the 50S subunit in the 70S ribosome.

Located at the top of the head of the 30S subunit, it contacts several helices of the 16S rRNA. In the 70S ribosome it contacts the 23S rRNA (bridge B1a) and protein L5 of the 50S subunit (bridge B1b), connecting the 2 subunits; these bridges are implicated in subunit movement. Contacts the tRNAs in the A and P-sites. The sequence is that of Small ribosomal subunit protein uS13 from Maridesulfovibrio salexigens (strain ATCC 14822 / DSM 2638 / NCIMB 8403 / VKM B-1763) (Desulfovibrio salexigens).